Here is a 314-residue protein sequence, read N- to C-terminus: Dihydroorotate dehydrogenase (fumarate) (314 aa).

Residues Lys-46, 70-74, and Asn-130 each bind substrate; that span reads NSMGL. A Glycyl lysine isopeptide (Lys-Gly) (interchain with G-Cter in ubiquitin) cross-link involves residue Lys-46. 46-47 contacts FMN; that stretch reads KS. Position 130 (Asn-130) interacts with FMN. Cys-133 acts as the Nucleophile in catalysis. Residues Lys-167 and Ile-195 each contribute to the FMN site. A substrate-binding site is contributed by 196 to 197; sequence NS. Residues Gly-224, 252–253, and 274–275 each bind FMN; these read GG and GT.

The protein belongs to the dihydroorotate dehydrogenase family. Type 1 subfamily. Homodimer. FMN serves as cofactor.

It is found in the cytoplasm. It carries out the reaction (S)-dihydroorotate + fumarate = orotate + succinate. It functions in the pathway pyrimidine metabolism; UMP biosynthesis via de novo pathway. The activity is independent of the presence of oxygen. Its function is as follows. Catalyzes the conversion of dihydroorotate to orotate with fumarate as the electron acceptor. Molecular oxygen can replace fumarate in vitro. Does not use oxaloacetate or NAD or NADP as electron acceptors. This chain is Dihydroorotate dehydrogenase (fumarate) (URA1), found in Saccharomyces cerevisiae (strain ATCC 204508 / S288c) (Baker's yeast).